We begin with the raw amino-acid sequence, 270 residues long: Checkpoint signal transducer rad25 (270 aa).

Phosphoserine occurs at positions 234 and 253. A disordered region spans residues 240–270 (QSAKEEAPAAAAASENEHPEPKESTTDTVKA). Residues 254-270 (ENEHPEPKESTTDTVKA) show a composition bias toward basic and acidic residues.

It belongs to the 14-3-3 family. As to quaternary structure, interacts with rad24. Interacts with byr2.

The protein resides in the cytoplasm. Its function is as follows. Acts in cell cycle and stress checkpoint signaling by sequestering signal transducers regulated by the checkpoints. Required for the DNA damage checkpoint that ensures that DNA damage is repaired before mitosis is attempted. Sequesters byr2 in the cytoplasm to prevent its translocation to the plasma membrane. The polypeptide is Checkpoint signal transducer rad25 (Schizosaccharomyces pombe (strain 972 / ATCC 24843) (Fission yeast)).